Reading from the N-terminus, the 104-residue chain is Flagellar hook-basal body complex protein FliE (104 aa).

This sequence belongs to the FliE family.

The protein localises to the bacterial flagellum basal body. This chain is Flagellar hook-basal body complex protein FliE, found in Pectobacterium atrosepticum (strain SCRI 1043 / ATCC BAA-672) (Erwinia carotovora subsp. atroseptica).